Reading from the N-terminus, the 183-residue chain is ATP-dependent protease subunit HslV (183 aa).

Residue T13 is part of the active site. G168, C171, and T174 together coordinate Na(+).

The protein belongs to the peptidase T1B family. HslV subfamily. A double ring-shaped homohexamer of HslV is capped on each side by a ring-shaped HslU homohexamer. The assembly of the HslU/HslV complex is dependent on binding of ATP.

Its subcellular location is the cytoplasm. It carries out the reaction ATP-dependent cleavage of peptide bonds with broad specificity.. Its activity is regulated as follows. Allosterically activated by HslU binding. Functionally, protease subunit of a proteasome-like degradation complex believed to be a general protein degrading machinery. In Xanthomonas axonopodis pv. citri (strain 306), this protein is ATP-dependent protease subunit HslV.